The chain runs to 443 residues: Xaa-Pro dipeptidase (443 aa).

Mn(2+) contacts are provided by Asp-246, Asp-257, His-339, Glu-384, and Glu-423.

It belongs to the peptidase M24B family. Bacterial-type prolidase subfamily. Mn(2+) serves as cofactor.

The enzyme catalyses Xaa-L-Pro dipeptide + H2O = an L-alpha-amino acid + L-proline. Functionally, splits dipeptides with a prolyl residue in the C-terminal position. The protein is Xaa-Pro dipeptidase of Erwinia tasmaniensis (strain DSM 17950 / CFBP 7177 / CIP 109463 / NCPPB 4357 / Et1/99).